Reading from the N-terminus, the 294-residue chain is Cytidine deaminase (294 aa).

CMP/dCMP-type deaminase domains follow at residues 48–168 and 186–294; these read DEDA…FGPK and LTGD…VLLG. 89-91 is a binding site for substrate; it reads NME. A Zn(2+)-binding site is contributed by H102. E104 functions as the Proton donor in the catalytic mechanism. Zn(2+) contacts are provided by C129 and C132.

It belongs to the cytidine and deoxycytidylate deaminase family. As to quaternary structure, homodimer. Zn(2+) serves as cofactor.

The enzyme catalyses cytidine + H2O + H(+) = uridine + NH4(+). It carries out the reaction 2'-deoxycytidine + H2O + H(+) = 2'-deoxyuridine + NH4(+). In terms of biological role, this enzyme scavenges exogenous and endogenous cytidine and 2'-deoxycytidine for UMP synthesis. The sequence is that of Cytidine deaminase from Escherichia fergusonii (strain ATCC 35469 / DSM 13698 / CCUG 18766 / IAM 14443 / JCM 21226 / LMG 7866 / NBRC 102419 / NCTC 12128 / CDC 0568-73).